We begin with the raw amino-acid sequence, 175 residues long: Deoxyuridine 5'-triphosphate nucleotidohydrolase (175 aa).

Residues 67-69 (RSG), N80, 84-86 (TVD), and K94 contribute to the substrate site. Residues 138-175 (RAEGGFGSTGGHAAVGADTNGQQGGNRYASVVSDRKGQ) are disordered.

Belongs to the dUTPase family. Mg(2+) serves as cofactor.

It catalyses the reaction dUTP + H2O = dUMP + diphosphate + H(+). The protein operates within pyrimidine metabolism; dUMP biosynthesis; dUMP from dCTP (dUTP route): step 2/2. In terms of biological role, this enzyme is involved in nucleotide metabolism: it produces dUMP, the immediate precursor of thymidine nucleotides and it decreases the intracellular concentration of dUTP so that uracil cannot be incorporated into DNA. This is Deoxyuridine 5'-triphosphate nucleotidohydrolase from Streptomyces avermitilis (strain ATCC 31267 / DSM 46492 / JCM 5070 / NBRC 14893 / NCIMB 12804 / NRRL 8165 / MA-4680).